The following is a 169-amino-acid chain: Phosphopantetheine adenylyltransferase (169 aa).

Substrate is bound at residue Ser10. ATP contacts are provided by residues 10 to 11 and His18; that span reads SF. 3 residues coordinate substrate: Lys42, Thr79, and Arg93. Residues 94–96, Glu104, and 129–135 contribute to the ATP site; these read GLR and VRPITAT.

This sequence belongs to the bacterial CoaD family. Homohexamer. Mg(2+) is required as a cofactor.

The protein localises to the cytoplasm. The catalysed reaction is (R)-4'-phosphopantetheine + ATP + H(+) = 3'-dephospho-CoA + diphosphate. It participates in cofactor biosynthesis; coenzyme A biosynthesis; CoA from (R)-pantothenate: step 4/5. Functionally, reversibly transfers an adenylyl group from ATP to 4'-phosphopantetheine, yielding dephospho-CoA (dPCoA) and pyrophosphate. The protein is Phosphopantetheine adenylyltransferase of Rhodopseudomonas palustris (strain ATCC BAA-98 / CGA009).